The primary structure comprises 429 residues: Cytochrome c biogenesis protein CcsB (429 aa).

Transmembrane regions (helical) follow at residues 14–34 (LKVA…GTAL), 72–92 (SFWF…CSWK), and 162–182 (VGPP…TYGV).

Belongs to the Ccs1/CcsB family. As to quaternary structure, may interact with CcsA.

It is found in the cellular thylakoid membrane. Required during biogenesis of c-type cytochromes (cytochrome c6 and cytochrome f) at the step of heme attachment. The chain is Cytochrome c biogenesis protein CcsB from Prochlorococcus marinus (strain SARG / CCMP1375 / SS120).